We begin with the raw amino-acid sequence, 515 residues long: MTATPKPLVLIILDGFGHSESPDYNAIYAAKKPVWDRLLATQPHGLISGSGMDVGLPDGQMGNSEVGHMNLGAGRVVYQDFTRVTKAIRDGEFFENPVIAAAVDKAVAADKAVHILGLLSPGGVHSHEDHLVAMAQMAARRGAGKIYLHAFLDGRDTPPKSAQPSLERLDATFAGLGKGRIASIIGRYFAMDRDNRWDRVQAAYELIVDGKAEFTADSSVAALEAAYARGESDEFVKATAVVPAGAEAVRVEDGDAVIFMNFRADRARELSRAFVEPAFKEFPREQAPQLAGFVMLTQYAASIPAPCAFPPEPLTNVLGEYLAKHGKTQLRIAETEKYAHVTFFFSGGREEPYEGEERILIPSPKVATYDLQPEMSAPEVTDRIVEAIEQQRYDVIVVNYANGDMVGHTGVFEAAVKAVECLDTCMGRIVEALDKVGGEALITADHGNVEQMEDESTGQAHTAHTCEPVPFVYVGKRKLSIREGGVLADVAPTMLTLMGLEQPAEMTGRSIVTLG.

Mn(2+) is bound by residues aspartate 14 and serine 64. The active-site Phosphoserine intermediate is the serine 64. Residues histidine 125, arginine 155–aspartate 156, arginine 187, arginine 193, arginine 263–arginine 266, and lysine 337 contribute to the substrate site. Residues aspartate 404, histidine 408, aspartate 445, histidine 446, and histidine 464 each contribute to the Mn(2+) site.

Belongs to the BPG-independent phosphoglycerate mutase family. Monomer. Mn(2+) is required as a cofactor.

The catalysed reaction is (2R)-2-phosphoglycerate = (2R)-3-phosphoglycerate. It participates in carbohydrate degradation; glycolysis; pyruvate from D-glyceraldehyde 3-phosphate: step 3/5. Its function is as follows. Catalyzes the interconversion of 2-phosphoglycerate and 3-phosphoglycerate. This chain is 2,3-bisphosphoglycerate-independent phosphoglycerate mutase, found in Pseudomonas aeruginosa (strain UCBPP-PA14).